Consider the following 880-residue polypeptide: Translation initiation factor IF-2 (880 aa).

Disordered regions lie at residues 51-78 (KQHG…GSTG), 93-116 (YVKR…QAAN), and 142-293 (KEAD…FEKP). A compositionally biased stretch (polar residues) spans 69–78 (STLNVKGSTG). The span at 142 to 229 (KEADEKAKKA…ARKKAAEGGD (88 aa)) shows a compositional bias: basic and acidic residues. Residues 269–279 (GRRTRRGKKQR) show a composition bias toward basic residues. The region spanning 380–549 (SRAPVVTIMG…LLQAEMLDLS (170 aa)) is the tr-type G domain. The tract at residues 389-396 (GHVDHGKT) is G1. 389 to 396 (GHVDHGKT) serves as a coordination point for GTP. The G2 stretch occupies residues 414–418 (GITQH). The segment at 435–438 (DTPG) is G3. GTP is bound by residues 435-439 (DTPGH) and 489-492 (NKID). A G4 region spans residues 489–492 (NKID). Positions 525-527 (SAK) are G5.

It belongs to the TRAFAC class translation factor GTPase superfamily. Classic translation factor GTPase family. IF-2 subfamily.

The protein resides in the cytoplasm. In terms of biological role, one of the essential components for the initiation of protein synthesis. Protects formylmethionyl-tRNA from spontaneous hydrolysis and promotes its binding to the 30S ribosomal subunits. Also involved in the hydrolysis of GTP during the formation of the 70S ribosomal complex. The chain is Translation initiation factor IF-2 from Psychromonas ingrahamii (strain DSM 17664 / CCUG 51855 / 37).